The primary structure comprises 187 residues: Phosphatidylethanolamine-binding protein 1 (187 aa).

A phosphoserine mark is found at S6 and S13. Position 42 is a phosphothreonine (T42). 4 positions are modified to phosphoserine: S52, S54, S98, and S153. Positions 93 to 134 (KGNDISSGTVLSDYVGSGPPKGTGLHRYVWLVYEQDRPLKCD) are interaction with RAF1.

The protein belongs to the phosphatidylethanolamine-binding protein family. Has a tendency to form dimers by disulfide cross-linking. Interacts with RAF1 and this interaction is enhanced if RAF1 is phosphorylated on residues 'Ser-338', 'Ser-339', 'Tyr-340' and 'Tyr-341'. Interacts with ALOX15; in response to IL13/interleukin-13, prevents the interaction of PEBP1 with RAF1 to activate the ERK signaling cascade.

Its subcellular location is the cytoplasm. In terms of biological role, binds ATP, opioids and phosphatidylethanolamine. Has lower affinity for phosphatidylinositol and phosphatidylcholine. Serine protease inhibitor which inhibits thrombin, neuropsin and chymotrypsin but not trypsin, tissue type plasminogen activator and elastase. Inhibits the kinase activity of RAF1 by inhibiting its activation and by dissociating the RAF1/MEK complex and acting as a competitive inhibitor of MEK phosphorylation. Its function is as follows. HCNP may be involved in the function of the presynaptic cholinergic neurons of the central nervous system. HCNP increases the production of choline acetyltransferase but not acetylcholinesterase. Seems to be mediated by a specific receptor. This chain is Phosphatidylethanolamine-binding protein 1 (PEBP1), found in Pongo abelii (Sumatran orangutan).